Reading from the N-terminus, the 492-residue chain is N-succinylglutamate 5-semialdehyde dehydrogenase (492 aa).

Gly220–Gly225 provides a ligand contact to NAD(+). Residues Glu243 and Cys277 contribute to the active site.

It belongs to the aldehyde dehydrogenase family. AstD subfamily.

The catalysed reaction is N-succinyl-L-glutamate 5-semialdehyde + NAD(+) + H2O = N-succinyl-L-glutamate + NADH + 2 H(+). It participates in amino-acid degradation; L-arginine degradation via AST pathway; L-glutamate and succinate from L-arginine: step 4/5. Catalyzes the NAD-dependent reduction of succinylglutamate semialdehyde into succinylglutamate. In Salmonella typhimurium (strain LT2 / SGSC1412 / ATCC 700720), this protein is N-succinylglutamate 5-semialdehyde dehydrogenase.